Here is a 546-residue protein sequence, read N- to C-terminus: Protein RDR1 (546 aa).

Positions 20 to 46 (CVPCRERKRKCNGKSPCEMCVAYGYVC) form a DNA-binding region, zn(2)-C6 fungal-type.

The protein resides in the nucleus. Functionally, transcriptional repressor of multidrug resistance genes, such as PDR5. Required for growth on non-fermentable carbon sources like lactate or glycerol. The polypeptide is Protein RDR1 (RDR1) (Saccharomyces cerevisiae (strain ATCC 204508 / S288c) (Baker's yeast)).